A 364-amino-acid polypeptide reads, in one-letter code: Long-wave-sensitive opsin 1 (364 aa).

A disordered region spans residues 1-23 (MAQQWSLQRLAGRHPQDSYEDST). The Extracellular portion of the chain corresponds to 1-52 (MAQQWSLQRLAGRHPQDSYEDSTQSSIFTYTNSNSTRGPFEGPNYHIAPRWV). Ser22 carries an O-linked (GlcNAc) serine glycan. Asn34 carries N-linked (GlcNAc...) asparagine glycosylation. A helical transmembrane segment spans residues 53–77 (YHLTSVWMIFVVTASVFTNGLVLAA). Residues 78–89 (TMKFKKLRHPLN) lie on the Cytoplasmic side of the membrane. A helical transmembrane segment spans residues 90–115 (WILVNLAVADLAETVIASTISIVNQV). Residues 116–129 (SGYFVLGHPMCVLE) lie on the Extracellular side of the membrane. A disulfide bridge connects residues Cys126 and Cys203. A helical membrane pass occupies residues 130-149 (GYTVSLCGITGLWSLAIISW). Residues 150–168 (ERWMVVCKPFGNVRFDAKL) are Cytoplasmic-facing. Residues 169-192 (AIVGIAFSWIWAAVWTAPPIFGWS) form a helical membrane-spanning segment. Over 193–218 (RYWPHGLKTSCGPDVFSGSSYPGVQS) the chain is Extracellular. The chain crosses the membrane as a helical span at residues 219-246 (YMIVLMVTCCIIPLAIIMLCYLQVWLAI). The Cytoplasmic segment spans residues 247-268 (RAVAKQQKESESTQKAEKEVTR). The helical transmembrane segment at 269–292 (MVVVMIFAYCVCWGPYTFFACFAA) threads the bilayer. At 293-300 (ANPGYAFH) the chain is on the extracellular side. A helical transmembrane segment spans residues 301–325 (PLMAALPAYFAKSATIYNPVIYVFM). The residue at position 312 (Lys312) is an N6-(retinylidene)lysine. Residues 326 to 364 (NRQFRNCILQLFGKKVDDGSELSSASKTEVSSVSSVSPA) lie on the Cytoplasmic side of the membrane.

It belongs to the G-protein coupled receptor 1 family. Opsin subfamily. Phosphorylated on some or all of the serine and threonine residues present in the C-terminal region. As to expression, the three color pigments are found in the cone photoreceptor cells.

The protein resides in the membrane. Its function is as follows. Visual pigments are the light-absorbing molecules that mediate vision. They consist of an apoprotein, opsin, covalently linked to cis-retinal. This chain is Long-wave-sensitive opsin 1 (OPN1LW), found in Homo sapiens (Human).